The primary structure comprises 206 residues: Nucleoside triphosphate pyrophosphatase (206 aa).

The active-site Proton acceptor is the aspartate 76.

The protein belongs to the Maf family. The cofactor is a divalent metal cation.

The protein localises to the cytoplasm. The catalysed reaction is a ribonucleoside 5'-triphosphate + H2O = a ribonucleoside 5'-phosphate + diphosphate + H(+). The enzyme catalyses a 2'-deoxyribonucleoside 5'-triphosphate + H2O = a 2'-deoxyribonucleoside 5'-phosphate + diphosphate + H(+). Functionally, nucleoside triphosphate pyrophosphatase. May have a dual role in cell division arrest and in preventing the incorporation of modified nucleotides into cellular nucleic acids. The sequence is that of Nucleoside triphosphate pyrophosphatase from Streptomyces coelicolor (strain ATCC BAA-471 / A3(2) / M145).